The following is a 162-amino-acid chain: MGLETEKADVQLFVDDDVYSRHSGVDYGDSEKFTDLGVDRDPRRLNSHLQLGFEDVIAEPVSTHSLDKVWICSHALFEISKYIIYKFLTVFLAIPLAFAAGILFATLSCLHIWITMPFVKTCLMVLPSVQTIWKSVTDVAIAPLCTSVGRSFSSVSLQLSHD.

Residues 1–86 lie on the Cytoplasmic side of the membrane; sequence MGLETEKADV…FEISKYIIYK (86 aa). The residue at position 19 (Tyr19) is a Phosphotyrosine; by SRC. Phosphoserine is present on residues Ser20 and Ser23. Tyr27 is modified (phosphotyrosine; by SRC). Residues 87 to 107 constitute an intramembrane region (helical); sequence FLTVFLAIPLAFAAGILFATL. Topologically, residues 108 to 162 are cytoplasmic; it reads SCLHIWITMPFVKTCLMVLPSVQTIWKSVTDVAIAPLCTSVGRSFSSVSLQLSHD.

This sequence belongs to the caveolin family. As to quaternary structure, monomer or homodimer. Interacts with CAV1; the interaction forms a stable heterooligomeric complex that is required for targeting to lipid rafts and for caveolae formation. Tyrosine phosphorylated forms do not form heterooligomers with the Tyr-19-phosphorylated form existing as a monomer or dimer, and the Tyr-27-form as a monomer only. Interacts (tyrosine phosphorylated form) with the SH2 domain-containing proteins, RASA1, NCK1 and SRC. Interacts (tyrosine phosphorylated form) with INSR, the interaction (Tyr-27-phosphorylated form) is increased on insulin stimulation. Interacts (Tyr-19 phosphorylated form) with MAPK1 (phosphorylated form); the interaction, promoted by insulin, leads to nuclear location and MAPK1 activation. Interacts with STAT3; the interaction is increased on insulin-induced tyrosine phosphorylation leading to STAT activation. In terms of processing, phosphorylated on serine and tyrosine residues. CAV1 promotes phosphorylation on Ser-23 which then targets the complex to the plasma membrane, lipid rafts and caveolae. Phosphorylation on both Tyr-19 and Tyr-27 is required for insulin-induced 'Ser-727' phosphorylation of STAT3 and its activation. Phosphorylation on Tyr-19 is required for insulin-induced phosphorylation of MAPK1 and DNA binding of STAT3. Tyrosine phosphorylation is induced by both EGF and insulin.

The protein localises to the nucleus. The protein resides in the cytoplasm. Its subcellular location is the golgi apparatus membrane. It localises to the cell membrane. It is found in the membrane. The protein localises to the caveola. May act as a scaffolding protein within caveolar membranes. Interacts directly with G-protein alpha subunits and can functionally regulate their activity. Acts as an accessory protein in conjunction with CAV1 in targeting to lipid rafts and driving caveolae formation. Positive regulator of cellular mitogenesis of the MAPK signaling pathway. Required for the insulin-stimulated nuclear translocation and activation of MAPK1 and STAT3, and the subsequent regulation of cell cycle progression. This chain is Caveolin-2 (CAV2), found in Dasypus novemcinctus (Nine-banded armadillo).